The following is a 326-amino-acid chain: Thiazole synthase (326 aa).

Lysine 168 (schiff-base intermediate with DXP) is an active-site residue. 1-deoxy-D-xylulose 5-phosphate-binding positions include glycine 229, 255-256, and 277-278; these read AG and NT.

Belongs to the ThiG family. As to quaternary structure, homotetramer. Forms heterodimers with either ThiH or ThiS.

It localises to the cytoplasm. The enzyme catalyses [ThiS sulfur-carrier protein]-C-terminal-Gly-aminoethanethioate + 2-iminoacetate + 1-deoxy-D-xylulose 5-phosphate = [ThiS sulfur-carrier protein]-C-terminal Gly-Gly + 2-[(2R,5Z)-2-carboxy-4-methylthiazol-5(2H)-ylidene]ethyl phosphate + 2 H2O + H(+). It participates in cofactor biosynthesis; thiamine diphosphate biosynthesis. Catalyzes the rearrangement of 1-deoxy-D-xylulose 5-phosphate (DXP) to produce the thiazole phosphate moiety of thiamine. Sulfur is provided by the thiocarboxylate moiety of the carrier protein ThiS. In vitro, sulfur can be provided by H(2)S. The sequence is that of Thiazole synthase from Magnetococcus marinus (strain ATCC BAA-1437 / JCM 17883 / MC-1).